We begin with the raw amino-acid sequence, 340 residues long: Ferrochelatase (340 aa).

Positions 189 and 292 each coordinate Fe cation.

The protein belongs to the ferrochelatase family.

It is found in the cytoplasm. The catalysed reaction is heme b + 2 H(+) = protoporphyrin IX + Fe(2+). It participates in porphyrin-containing compound metabolism; protoheme biosynthesis; protoheme from protoporphyrin-IX: step 1/1. Catalyzes the ferrous insertion into protoporphyrin IX. The protein is Ferrochelatase of Pseudomonas paraeruginosa (strain DSM 24068 / PA7) (Pseudomonas aeruginosa (strain PA7)).